Here is a 490-residue protein sequence, read N- to C-terminus: MLPLVLFILLAATLLFWKWQGNHWRRLGLEAPFGWPLVGNMLDFALGRRSYGEIYQEIYTRNPGLKYVGFYRLFNEPAILVRDQELLRQILVGRNFADCADNAVYVDHQRDVLASHNPFIANGDRWRVLRADLVPLFTPSRVRQTLPHVARACQLLRDQVPLGRFEAKDLATRYTLQVVASAIFGLDAHCLGIHMRVAHEPSRWLEWLAPLFQPSVWSLLETMSLLHTPRLGRLIGHRYVPLPLQHWFRELVEARSGGDNLLQWLAESKRGLGKEELAGHATTLLLEGYETSAMLLAFALYELALNEDAQRRLHIELDEVAQRHAGNLIDPVALGELRYSEAALLEALRLHPAMQALQKRCTKTFTLPDQKSGASSELKVHLGTVLVLPVQAIHLDPALYPAPNQFRPERFLNQPPMGCRFLGFGAGPRMCPGMRLGLLQTKAALTTLLQDHCVQLADEDQCRVEVSPLTFLTASRNGIWLSFKRRTRRY.

Cysteine 431 is a heme binding site.

It belongs to the cytochrome P450 family. Heme serves as cofactor.

It localises to the endoplasmic reticulum membrane. Its subcellular location is the microsome membrane. Functionally, may be involved in the metabolism of insect hormones and in the breakdown of synthetic insecticides. The polypeptide is Probable cytochrome P450 308a1 (Cyp308a1) (Drosophila melanogaster (Fruit fly)).